Consider the following 321-residue polypeptide: Probable DNA polymerase III subunit delta (321 aa).

It belongs to the DNA polymerase HolA subunit family. In terms of assembly, component of the DNA clamp loading complex consisting of tau(3):delta(1):delta'(1). The DNA polymerase III holoenzyme complex contains at least 10 different subunits organized into 3 functionally essential subassemblies: the Pol III core, the beta sliding clamp processivity factor and the clamp-loading complex. The Pol III core (subunits alpha, epsilon and theta) contains the polymerase and the 3'-5' exonuclease proofreading activities. The polymerase is tethered to the template via the dimeric beta sliding clamp processivity factor. The DNA clamp-loading complex assembles the beta sliding clamp onto the primed template and plays a central role in the organization and communication at the replication fork.

The enzyme catalyses DNA(n) + a 2'-deoxyribonucleoside 5'-triphosphate = DNA(n+1) + diphosphate. Part of the beta sliding clamp loading complex, which hydrolyzes ATP to load the beta clamp onto primed DNA to form the DNA replication pre-initiation complex. DNA polymerase III is a complex, multichain enzyme responsible for most of the replicative synthesis in bacteria. This DNA polymerase also exhibits 3'-5' exonuclease activity. The delta subunit is the wrench that will open the beta subunit dimer. The DNA clamp loading complex (tau(3),delta,delta') is thought to load beta dimers onto DNA by binding ATP which alters the complex's conformation so it can bind beta sliding clamp dimers and open them at one interface. Primed DNA is recognized, ATP is hydrolyzed releasing the clamp loading complex and closing the beta sliding clamp ring around the primed DNA. This is Probable DNA polymerase III subunit delta from Rickettsia prowazekii (strain Madrid E).